The following is a 283-amino-acid chain: Diphthine methyl ester synthase (283 aa).

Residues Leu-9, Asp-84, Gly-87, 112-113, Leu-163, Met-221, and His-246 each bind S-adenosyl-L-methionine; that span reads SI.

It belongs to the diphthine synthase family.

The protein resides in the cytoplasm. It catalyses the reaction 2-[(3S)-amino-3-carboxypropyl]-L-histidyl-[translation elongation factor 2] + 4 S-adenosyl-L-methionine = diphthine methyl ester-[translation elongation factor 2] + 4 S-adenosyl-L-homocysteine + 3 H(+). Its pathway is protein modification; peptidyl-diphthamide biosynthesis. In terms of biological role, S-adenosyl-L-methionine-dependent methyltransferase that catalyzes four methylations of the modified target histidine residue in translation elongation factor 2 (EF-2), to form an intermediate called diphthine methyl ester. The four successive methylation reactions represent the second step of diphthamide biosynthesis. This is Diphthine methyl ester synthase (dph5) from Schizosaccharomyces pombe (strain 972 / ATCC 24843) (Fission yeast).